A 434-amino-acid chain; its full sequence is Lecithin-cholesterol acyltransferase-like 1 (434 aa).

Ser191 functions as the Acyl-ester intermediate in the catalytic mechanism. Active-site charge relay system residues include Asp354 and His386.

It belongs to the AB hydrolase superfamily. Lipase family.

This Oryza sativa subsp. japonica (Rice) protein is Lecithin-cholesterol acyltransferase-like 1.